The chain runs to 108 residues: Ig kappa chain V region BS-5 (108 aa).

The interval 1 to 23 (DVVMTQTPASVSEPVGGTVTIKC) is framework-1. Disulfide bonds link cysteine 23–cysteine 88 and cysteine 80–glycine 108. The segment at 24 to 34 (QASQSIYSNLA) is complementarity-determining-1. Positions 35-49 (WYQZKPGQPPKLLIY) are framework-2. The complementarity-determining-2 stretch occupies residues 50 to 56 (KASTLES). A framework-3 region spans residues 57–88 (GVPSRFKGSGSGTDFTLTISDLECADAATYFC). The segment at 89–97 (QGSBYTGTV) is complementarity-determining-3. The interval 98-107 (FGGGTEVVVK) is framework-4.

In Oryctolagus cuniculus (Rabbit), this protein is Ig kappa chain V region BS-5.